We begin with the raw amino-acid sequence, 237 residues long: Isoprenyl transferase (237 aa).

Aspartate 14 is an active-site residue. A Mg(2+)-binding site is contributed by aspartate 14. Residues 15–18 (GNGR), tryptophan 19, arginine 27, histidine 31, and 59–61 (STE) each bind substrate. Asparagine 62 serves as the catalytic Proton acceptor. Residues tryptophan 63, arginine 65, arginine 184, and 190–192 (RIS) contribute to the substrate site. Glutamate 203 serves as a coordination point for Mg(2+).

The protein belongs to the UPP synthase family. As to quaternary structure, homodimer. Requires Mg(2+) as cofactor.

Functionally, catalyzes the condensation of isopentenyl diphosphate (IPP) with allylic pyrophosphates generating different type of terpenoids. This is Isoprenyl transferase from Helicobacter hepaticus (strain ATCC 51449 / 3B1).